Consider the following 548-residue polypeptide: Glucose-6-phosphate isomerase (548 aa).

The active-site Proton donor is Glu-354. Active-site residues include His-385 and Lys-513.

The protein belongs to the GPI family.

Its subcellular location is the cytoplasm. It catalyses the reaction alpha-D-glucose 6-phosphate = beta-D-fructose 6-phosphate. Its pathway is carbohydrate biosynthesis; gluconeogenesis. It functions in the pathway carbohydrate degradation; glycolysis; D-glyceraldehyde 3-phosphate and glycerone phosphate from D-glucose: step 2/4. In terms of biological role, catalyzes the reversible isomerization of glucose-6-phosphate to fructose-6-phosphate. The polypeptide is Glucose-6-phosphate isomerase (Marinomonas sp. (strain MWYL1)).